The chain runs to 381 residues: Pectin lyase 1 (381 aa).

Positions 1 to 20 (MKYASFIAAAAAALASAVSA) are cleaved as a signal peptide. Cystine bridges form between C83-C102 and C92-C227. N130 carries an N-linked (GlcNAc...) asparagine glycan. R257 is a catalytic residue. A disulfide bridge links C324 with C332.

This sequence belongs to the polysaccharide lyase 1 family.

The protein localises to the secreted. It carries out the reaction Eliminative cleavage of (1-&gt;4)-alpha-D-galacturonan methyl ester to give oligosaccharides with 4-deoxy-6-O-methyl-alpha-D-galact-4-enuronosyl groups at their non-reducing ends.. In terms of biological role, pectinolytic enzymes consist of four classes of enzymes: pectin lyase, polygalacturonase, pectin methylesterase and rhamnogalacturonase. Among pectinolytic enzymes, pectin lyase is the most important in depolymerization of pectin, since it cleaves internal glycosidic bonds of highly methylated pectins. The chain is Pectin lyase 1 (pel1) from Aspergillus oryzae (strain ATCC 42149 / RIB 40) (Yellow koji mold).